The following is a 350-amino-acid chain: MKLVDEAEIEVFAGNGGNGCIGFRREKFIPLGGPDGGDGGAGGSVYIRADENLNTLVDFRHDRIFKAQRGENGMGRQAYGKGGEDLTITVPVGTVIINVATDEIIGDLTQHGDRLLVAQGGRGGLGNMHFKSSTNRSPRQALPGEPGEERTLKLELKLLADVGLLGFPNAGKSTLIRAVSAATPKVADYPFTTLYPNLGVVKVENYRSFVIADIPGLIEGAADGAGLGAQFLRHLQRTRLLLHLVDISPMEGGVEGISPVEQVRAIERELEKHDPELLQKPRWLVLNKADLMFEDEAKAAAEQIVAELGWKEPWFLVSALGREGTFPIMSRIMAFFDRQKEDELEARNAL.

The region spanning 1-159 is the Obg domain; it reads MKLVDEAEIE…RTLKLELKLL (159 aa). The interval 127–147 is disordered; that stretch reads NMHFKSSTNRSPRQALPGEPG. An OBG-type G domain is found at 160–337; the sequence is ADVGLLGFPN…IMSRIMAFFD (178 aa). GTP contacts are provided by residues 166-173, 191-195, 213-216, 287-290, and 318-320; these read GFPNAGKS, FTTLY, DIPG, NKAD, and SAL. Residues S173 and T193 each contribute to the Mg(2+) site.

It belongs to the TRAFAC class OBG-HflX-like GTPase superfamily. OBG GTPase family. In terms of assembly, monomer. Requires Mg(2+) as cofactor.

The protein localises to the cytoplasm. In terms of biological role, an essential GTPase which binds GTP, GDP and possibly (p)ppGpp with moderate affinity, with high nucleotide exchange rates and a fairly low GTP hydrolysis rate. Plays a role in control of the cell cycle, stress response, ribosome biogenesis and in those bacteria that undergo differentiation, in morphogenesis control. The polypeptide is GTPase Obg (Stenotrophomonas maltophilia (strain R551-3)).